The primary structure comprises 607 residues: COMPASS component cclA (607 aa).

Low complexity predominate over residues Met1–Pro19. Disordered regions lie at residues Met1–His22 and Gly34–Ala86. Basic residues predominate over residues Ser57–Glu69. The region spanning Ile157–Ala376 is the B30.2/SPRY domain. The interval Asn587–Gly607 is disordered.

Belongs to the cclA family. As to quaternary structure, component of the COMPASS complex.

The protein resides in the nucleus. Its subcellular location is the chromosome. It is found in the telomere. Its function is as follows. Component of the COMPASS (Set1C) complex that specifically mono-, di- and trimethylates histone H3 to form H3K4me1/2/3, which subsequently plays a role in telomere length maintenance and transcription elongation regulation. Controls the production of several secondary metabolites, including monodictyphenone, emodin and emodin derivatives, as well as two anti-osteoporosis polyketides, F9775A and F9775B. The protein is COMPASS component cclA of Emericella nidulans (strain FGSC A4 / ATCC 38163 / CBS 112.46 / NRRL 194 / M139) (Aspergillus nidulans).